The chain runs to 111 residues: Ig kappa chain V-III region PC 2413 (111 aa).

The segment at 1–23 is framework-1; that stretch reads DIVLTQSPASLAVSLGQRATISC. A disulfide bond links cysteine 23 and cysteine 92. Positions 24–38 are complementarity-determining-1; it reads RASESVVNYGVSLMH. The segment at 39–53 is framework-2; it reads WFQQKPGQPPKLLIY. The complementarity-determining-2 stretch occupies residues 54-60; the sequence is GASNRGS. The segment at 61–92 is framework-3; the sequence is GVPARFSGSGSGTDFSLIIHPMEEDDSAMYFC. A complementarity-determining-3 region spans residues 93-101; that stretch reads HQTKEVPWT. Positions 102–111 are framework-4; it reads FGGGTDLEIE.

The polypeptide is Ig kappa chain V-III region PC 2413 (Mus musculus (Mouse)).